The sequence spans 290 residues: Pyridoxal kinase PdxY (290 aa).

Residues S12 and 47 to 48 contribute to the substrate site; that span reads TQ. ATP is bound by residues D114, E151, K184, and 211 to 214; that span reads RPLL. D225 contacts substrate.

This sequence belongs to the pyridoxine kinase family. PdxY subfamily. Homodimer. It depends on Mg(2+) as a cofactor.

It carries out the reaction pyridoxal + ATP = pyridoxal 5'-phosphate + ADP + H(+). The protein operates within cofactor metabolism; pyridoxal 5'-phosphate salvage; pyridoxal 5'-phosphate from pyridoxal: step 1/1. Its function is as follows. Pyridoxal kinase involved in the salvage pathway of pyridoxal 5'-phosphate (PLP). Catalyzes the phosphorylation of pyridoxal to PLP. In Pseudomonas fluorescens (strain Pf0-1), this protein is Pyridoxal kinase PdxY.